The sequence spans 349 residues: Protein RecA (349 aa).

An ATP-binding site is contributed by 69-76 (GPESSGKT).

The protein belongs to the RecA family.

It is found in the cytoplasm. Can catalyze the hydrolysis of ATP in the presence of single-stranded DNA, the ATP-dependent uptake of single-stranded DNA by duplex DNA, and the ATP-dependent hybridization of homologous single-stranded DNAs. It interacts with LexA causing its activation and leading to its autocatalytic cleavage. This Crocosphaera subtropica (strain ATCC 51142 / BH68) (Cyanothece sp. (strain ATCC 51142)) protein is Protein RecA.